Reading from the N-terminus, the 136-residue chain is Galectin-7 (136 aa).

In terms of domain architecture, Galectin spans 6-136; the sequence is HKTPLPQGVR…DVQLHSVKIF (131 aa). 70–76 is a binding site for a beta-D-galactoside; that stretch reads WGREERG.

As to quaternary structure, monomer.

The protein resides in the cytoplasm. Its subcellular location is the nucleus. The protein localises to the secreted. Could be involved in cell-cell and/or cell-matrix interactions necessary for normal growth control. Pro-apoptotic protein that functions intracellularly upstream of JNK activation and cytochrome c release. The sequence is that of Galectin-7 (Lgals7) from Rattus norvegicus (Rat).